The sequence spans 1017 residues: Nonsense-mediated mRNA decay factor SMG5 (1017 aa).

N-acetylserine is present on S2. A phosphoserine mark is found at S2 and S423. Disordered regions lie at residues 406-562 and 597-640; these read GENP…PSEA and TEPN…CRNE. The segment covering 448–467 has biased composition (basic residues); the sequence is KSRKHSRLSCLRRRRRHHPP. Positions 486-496 are enriched in low complexity; the sequence is DSAQASDGSDS. Acidic residues predominate over residues 620–629; that stretch reads ASEDGSESEG. Residues 798–842 adopt a coiled-coil conformation; that stretch reads AQSEQESLLQQAQAQFRMAEEEARRNRLMRDMAQLRLQLEVSQLE. Residues 873 to 996 enclose the PINc domain; the sequence is RQLATSGRFI…GPMQAALQAA (124 aa).

In terms of assembly, interacts with TERT, PPP2CA and SMG1. Part of a complex that contains SMG1, SMG5, SMG7, PPP2CA, a short isoform of UPF3A (isoform UPF3AS, but not isoform UPF3AL) and phosphorylated UPF1. Not detected in complexes that contain unphosphorylated UPF1.

It is found in the cytoplasm. The protein localises to the nucleus. In terms of biological role, plays a role in nonsense-mediated mRNA decay. Does not have RNase activity by itself. Promotes dephosphorylation of UPF1. Together with SMG7 is thought to provide a link to the mRNA degradation machinery involving exonucleolytic pathways, and to serve as an adapter for UPF1 to protein phosphatase 2A (PP2A), thereby triggering UPF1 dephosphorylation. Necessary for TERT activity. In Mus musculus (Mouse), this protein is Nonsense-mediated mRNA decay factor SMG5.